The primary structure comprises 360 residues: Epoxide hydrolase 3 (360 aa).

The chain crosses the membrane as a helical span at residues 22–42 (AFMWSLVFSVALVAAAVYGCI). The Nucleophile role is filled by Asp173. Tyr281 serves as the catalytic Proton donor. His337 (proton acceptor) is an active-site residue.

It belongs to the AB hydrolase superfamily. Epoxide hydrolase family.

It localises to the microsome membrane. The enzyme catalyses an epoxide + H2O = an ethanediol. It catalyses the reaction 9,10-epoxyoctadecanoate + H2O = 9,10-dihydroxyoctadecanoate. The catalysed reaction is 9,10-epoxy-(12Z)-octadecenoate + H2O = 9,10-dihydroxy-(12Z)-octadecenoate. It carries out the reaction 8,9-epoxy-(5Z,11Z,14Z)-eicosatrienoate + H2O = 8,9-dihydroxy-(5Z,11Z,14Z)-eicosatrienoate. The enzyme catalyses 11,12-epoxy-(5Z,8Z,14Z)-eicosatrienoate + H2O = 11,12-dihydroxy-(5Z,8Z,14Z)-eicosatrienoate. It catalyses the reaction 14,15-epoxy-(5Z,8Z,11Z)-eicosatrienoate + H2O = 14,15-dihydroxy-(5Z,8Z,11Z)-eicosatrienoate. Its activity is regulated as follows. Inhibited by 1-(1-acetylpiperidin-4-yl)-3-(4-(trifl uoromethoxy)phenyl)urea (TPAU), 1-cyclohexyl-3-dodecylurea (CDU), 12-(3-adamantan-1-yl-ureido)-dodecanoic acid (AUDA), 1-((3S, 5S, 7S)-adamantan-1-yl)-3-(5-(2-(2-ethoxyethoxy) ethoxy)pentyl)urea (AEPU) and to a lesser extent by 8-(3-((3S, 5S, 7S)-adamantan-1-yl)ureido) octanoic acid (AUOA). Its function is as follows. Catalyzes the hydrolysis of epoxide-containing fatty acids. Active in vitro against epoxyeicosatrienoic acids (EETs) including 8,9-EET, 9,10-EET, 11,12-EET and 14,15-EET and leukotoxin. This is Epoxide hydrolase 3 (EPHX3) from Homo sapiens (Human).